A 148-amino-acid polypeptide reads, in one-letter code: Large ribosomal subunit protein bL9 (148 aa).

This sequence belongs to the bacterial ribosomal protein bL9 family.

In terms of biological role, binds to the 23S rRNA. The chain is Large ribosomal subunit protein bL9 from Bacillus cereus (strain ATCC 10987 / NRS 248).